The sequence spans 194 residues: NADH-quinone oxidoreductase subunit B (194 aa).

4 residues coordinate [4Fe-4S] cluster: Cys73, Cys74, Cys138, and Cys168.

The protein belongs to the complex I 20 kDa subunit family. NDH-1 is composed of 14 different subunits. Subunits NuoB, C, D, E, F, and G constitute the peripheral sector of the complex. [4Fe-4S] cluster is required as a cofactor.

It localises to the cell inner membrane. It carries out the reaction a quinone + NADH + 5 H(+)(in) = a quinol + NAD(+) + 4 H(+)(out). In terms of biological role, NDH-1 shuttles electrons from NADH, via FMN and iron-sulfur (Fe-S) centers, to quinones in the respiratory chain. The immediate electron acceptor for the enzyme in this species is believed to be ubiquinone. Couples the redox reaction to proton translocation (for every two electrons transferred, four hydrogen ions are translocated across the cytoplasmic membrane), and thus conserves the redox energy in a proton gradient. The chain is NADH-quinone oxidoreductase subunit B from Bradyrhizobium sp. (strain BTAi1 / ATCC BAA-1182).